We begin with the raw amino-acid sequence, 162 residues long: UPF0305 protein MMP0665 (162 aa).

Belongs to the UPF0305 family.

The polypeptide is UPF0305 protein MMP0665 (Methanococcus maripaludis (strain DSM 14266 / JCM 13030 / NBRC 101832 / S2 / LL)).